The following is a 634-amino-acid chain: MTNSNLRTENHFDYVKISIASPQRIMDWGQRTLPNGQVVGEVTKPETINYRTLKPEMDGLFCEKIFGPSKDWECHCGKYKRVRHRGIVCERCGVEVTESRVRRHRMGYIKLAAPVSHVWYLKGIPSYVAILLDIPLRDVEQIVYFNCYVVLDPGDHKELKYKQLLTEDEWLEIEDEIYAEDSIIENEPIVGIGAEALKQLLEDLDLNQVAEELREEITNSKGQKRAKLIKRIRVIDNFIATNAKPEWMVLDAIPVIPPDLRPMVQLDGGRFATSDLNDLYRRVINRNNRLARLQEILAPEIIVRNEKRMLQEAVDALIDNGRRGRTVVGANNRALKSLSDIIEGKQGRFRQNLLGKRVDYSGRSVIVVGPKLKMHQCGLPKEMAIELFQPFVIHRLIRQNIVNNIKAAKKLIQKADDEVMQVLQEVIDGHPILLNRAPTLHRLGIQAFEPKLVGGRAIQLHPLVCPAFNADFDGDQMAVHVPLALEAQTEARMLMLASNNILSPATGEPIVTPSQDMVLGSYYLTALQPNYQKPEFGDNKTTFASLEDVIFAFEDKRLSLHEWVWVRFNGEVEDEDEMRSPQKTQELEDGSKLEIWNLRRDRFDSDNNLISRFVLTTVGRVVMNYTIIDSVSKT.

Residues cysteine 74, cysteine 76, cysteine 89, and cysteine 92 each contribute to the Zn(2+) site. Positions 471, 473, and 475 each coordinate Mg(2+).

This sequence belongs to the RNA polymerase beta' chain family. RpoC1 subfamily. In terms of assembly, in cyanobacteria the RNAP catalytic core is composed of 2 alpha, 1 beta, 1 beta', 1 gamma and 1 omega subunit. When a sigma factor is associated with the core the holoenzyme is formed, which can initiate transcription. Mg(2+) serves as cofactor. The cofactor is Zn(2+).

The enzyme catalyses RNA(n) + a ribonucleoside 5'-triphosphate = RNA(n+1) + diphosphate. In terms of biological role, DNA-dependent RNA polymerase catalyzes the transcription of DNA into RNA using the four ribonucleoside triphosphates as substrates. This chain is DNA-directed RNA polymerase subunit gamma, found in Prochlorococcus marinus (strain MIT 9215).